The primary structure comprises 213 residues: MQNKINEKQQKILDFLNEQIEKNGYPPSVREICNAVGFKSTSTVHSYLEKLRKQGLIQKDPSKPRALKVINNKKNSKTDEPKNIYSGKELVEVPIIGKVTAGQPILAVENIEDTFPLPLDFVQNSTVFMLRVQGDSMIEAGIFDNDYIVVKQQSTANNGDIVVALIDDEATVKTFYKEKGFIRLQPANKFYDPIIVRDNLSILGKVIGVFRKM.

A DNA-binding region (H-T-H motif) is located at residues 29-49; it reads VREICNAVGFKSTSTVHSYLE. Residues Ser136 and Lys173 each act as for autocatalytic cleavage activity in the active site.

Belongs to the peptidase S24 family. In terms of assembly, homodimer.

It catalyses the reaction Hydrolysis of Ala-|-Gly bond in repressor LexA.. Functionally, represses a number of genes involved in the response to DNA damage (SOS response), including recA and lexA. In the presence of single-stranded DNA, RecA interacts with LexA causing an autocatalytic cleavage which disrupts the DNA-binding part of LexA, leading to derepression of the SOS regulon and eventually DNA repair. The protein is LexA repressor of Acetivibrio thermocellus (strain ATCC 27405 / DSM 1237 / JCM 9322 / NBRC 103400 / NCIMB 10682 / NRRL B-4536 / VPI 7372) (Clostridium thermocellum).